The sequence spans 379 residues: Hydrogenase expression/formation protein HupD (379 aa).

The Fe cation site is built by Cys-36, Cys-64, and Cys-67.

Belongs to the HypD family.

In Azotobacter chroococcum mcd 1, this protein is Hydrogenase expression/formation protein HupD (hupD).